Consider the following 956-residue polypeptide: Calsyntenin-3 (956 aa).

The first 19 residues, 1–19 (MTLLLLPLLLASLLASCSC), serve as a signal peptide directing secretion. The Cytoplasmic portion of the chain corresponds to 1-30 (MTLLLLPLLLASLLASCSCNKANKHKPWIE). Topologically, residues 20 to 847 (NKANKHKPWI…SHRNSMIPSA (828 aa)) are extracellular. 2 Cadherin domains span residues 29 to 145 (IEAE…APVF) and 146 to 246 (VERL…KPSW). The helical intramembrane region spans 31–51 (AEYQGIVMENDNTVLLNPPLF). Residues 52–71 (ALDKDAPLRYAGEICGFRLH) lie on the Cytoplasmic side of the membrane. Positions 72–94 (GSGVPFEAVILDKATGEGLIRAK) form an intramembrane region, helical. Over 95-151 (EPVDCEAQKEHTFTIQAYDCGEGPDGANTKKSHKATVHVRVNDVNEFAPVFVERLYR) the chain is Cytoplasmic. The helical intramembrane region spans 152–172 (AAVTEGKLYDRILRVEAIDGD). The Cytoplasmic portion of the chain corresponds to 173 to 255 (CSPQYSQICY…WQGWNKRIEY (83 aa)). A helical transmembrane segment spans residues 256–276 (APGAGSLALFPGIRLETCDEP). The Lumenal portion of the chain corresponds to 277–364 (LWNIQATIEL…PLGGPSGLGS (88 aa)). Residues Asn299, Asn327, Asn347, Asn507, and Asn740 are each glycosylated (N-linked (GlcNAc...) asparagine). Residues 848 to 868 (ATLIIVVCVGFLVLMVVLGLV) traverse the membrane as a helical segment. Over 869 to 956 (RIHSLHRRVS…RIIETPPHRY (88 aa)) the chain is Cytoplasmic. The tract at residues 916-956 (QSCVTGAVGGQQEDEDSSDSEVADSPSSDERRIIETPPHRY) is disordered. Over residues 927-937 (QEDEDSSDSEV) the composition is skewed to acidic residues. The span at 943–956 (SDERRIIETPPHRY) shows a compositional bias: basic and acidic residues.

The protein belongs to the calsyntenin family. In terms of assembly, interacts (via cadherin domains) with both alpha and beta isoforms of neurexins (NRXN1, NRXN2 and NRXN3). Directly interacts with APBA2. Forms a tripartite complex with APBA2 and APP. Interacts with low affinity with KLC1. Interacts with SLC23A2/SVCT2. As to quaternary structure, interacts with CIDEA; inhibiting the lipid transferase activity of CIDEA. Interacts with CIDEC; inhibiting the lipid transferase activity of CIDEC. In terms of processing, proteolytically processed under normal cellular conditions. A primary zeta-cleavage generates a large extracellular (soluble) N-terminal domain (sAlc) and a short C-terminal transmembrane fragment (CTF1). A secondary cleavage catalyzed by gamma-secretase within the transmembrane domain releases the beta-Alc-beta chain in the extracellular milieu and produces an intracellular fragment (AlcICD). This processing is strongly suppressed in the tripartite complex formed with APBA2 and APP, which seems to prevent the association with gamma-secretase. Ubiquitinated: endoplasmic reticulum-localized protein is ubiquitinated and degraded by the endoplasmic reticulum-associated degradation (ERAD) pathway. According to PubMed:12498782, expressed predominantly in the brain and in kidney. Low levels in heart, skeletal muscle, liver, placenta, pancreas and lung. According to PubMed:12972431, predominant expression in brain, and only marginal in kidney. In brain, present throughout all cortical layers, highest levels in GABAergic neurons (based on morphology and distribution pattern). In terms of tissue distribution, expression is restricted to adipose tissue, with high expression in multilocular thermogenic adipocytes (brown adipose tissue).

Its subcellular location is the postsynaptic cell membrane. It is found in the endoplasmic reticulum membrane. The protein localises to the golgi apparatus membrane. The protein resides in the cell projection. It localises to the dendrite. Its subcellular location is the lipid droplet. In terms of biological role, postsynaptic adhesion molecule that binds to presynaptic neurexins to mediate both excitatory and inhibitory synapse formation. Promotes synapse development by acting as a cell adhesion molecule at the postsynaptic membrane, which associates with both neurexin-alpha and neurexin-beta proteins at the presynaptic membrane. Regulates the balance between excitatory and inhibitory synapses by inhibiting formation of excitatory parallel-fiber synapses and promoting formation of inhibitory synapses in the same neuron. May also be involved in ascorbate (vitamin C) uptake via its interaction with SLC23A2/SVCT2. Complex formation with APBA2 and APP, stabilizes APP metabolism and enhances APBA2-mediated suppression of beta-APP40 secretion, due to the retardation of intracellular APP maturation. Adipose-specific isoform that plays a key role in adaptive thermogenesis. Facilitates the efficient use of stored triglyceride by promoting multilocular morphology of thermogenic adipocytes: acts by inhibiting the activity of CIDEA and CIDEC on lipid droplets, thereby preventing lipid droplet fusion and facilitating lipid utilization. May also participate in adaptive thermogenesis by promoting sympathetic innervation of thermogenic adipose tissue: acts by driving secretion of neurotrophic factor S100B from brown adipocytes, stimulating neurite outgrowth from sympathetic neurons. The sequence is that of Calsyntenin-3 from Homo sapiens (Human).